The chain runs to 1379 residues: DNA-directed RNA polymerase subunit beta (1379 aa).

It belongs to the RNA polymerase beta chain family. In terms of assembly, the RNAP catalytic core consists of 2 alpha, 1 beta, 1 beta' and 1 omega subunit. When a sigma factor is associated with the core the holoenzyme is formed, which can initiate transcription.

The catalysed reaction is RNA(n) + a ribonucleoside 5'-triphosphate = RNA(n+1) + diphosphate. Functionally, DNA-dependent RNA polymerase catalyzes the transcription of DNA into RNA using the four ribonucleoside triphosphates as substrates. The chain is DNA-directed RNA polymerase subunit beta from Ruegeria sp. (strain TM1040) (Silicibacter sp.).